Consider the following 39-residue polypeptide: MIEPLLCGIVLGLVPITLLGLFVSAWNQYRRGSGMLDID.

Residues 5 to 25 (LLCGIVLGLVPITLLGLFVSA) traverse the membrane as a helical segment.

Belongs to the PetG family. In terms of assembly, the 4 large subunits of the cytochrome b6-f complex are cytochrome b6, subunit IV (17 kDa polypeptide, PetD), cytochrome f and the Rieske protein, while the 4 small subunits are PetG, PetL, PetM and PetN. The complex functions as a dimer.

It is found in the cellular thylakoid membrane. Functionally, component of the cytochrome b6-f complex, which mediates electron transfer between photosystem II (PSII) and photosystem I (PSI), cyclic electron flow around PSI, and state transitions. PetG is required for either the stability or assembly of the cytochrome b6-f complex. The protein is Cytochrome b6-f complex subunit 5 of Prochlorococcus marinus (strain MIT 9301).